The sequence spans 280 residues: Probable 2-(5''-triphosphoribosyl)-3'-dephosphocoenzyme-A synthase (280 aa).

Belongs to the CitG/MdcB family.

It catalyses the reaction 3'-dephospho-CoA + ATP = 2'-(5''-triphospho-alpha-D-ribosyl)-3'-dephospho-CoA + adenine. The polypeptide is Probable 2-(5''-triphosphoribosyl)-3'-dephosphocoenzyme-A synthase (Lactiplantibacillus plantarum (strain ATCC BAA-793 / NCIMB 8826 / WCFS1) (Lactobacillus plantarum)).